The chain runs to 407 residues: MQIVRSCNSNNKPLIPSSNWHIAIRMRGDGVKDRSIDVLSLKHFESQKVVLPQDLFMDNFTWMFYEFFKCFTFRTWLLLLLLMWLPGFLSQIKSINRIFPFKLCILVSCLVGIFLPNIYSFSHKSVLTNQLTQFSKEIVEHAPGTDTHDWETVAANLNSYFYENKAWNTEYFFFNAAECQKAFRKVLLEPFSVKKDESSKIKSFGDSVPYIEEALQVYSTEFDKKWKLFNTEKVWSPDNLEHVQLPKKTYRYKFTWVLKRIFNLWLFPAFILFLACIYVSWDKGHLFRILCCGGGFLLMVRVFQNMRPFSMHMEDKMQFLSTIINEQESGANGWDEIAKKMNRYLFEKKVWTSEEFFFDGIDCEWFFNHFFYRLLSTKKPMFDRPLNVELWPYIKEAQLTRKQAPPV.

3 helical membrane-spanning segments follow: residues 75–95 (TWLL…IKSI), 98–118 (IFPF…LPNI), and 261–281 (IFNL…YVSW).

Belongs to the DUP/COS family.

It localises to the membrane. This Saccharomyces cerevisiae (strain ATCC 204508 / S288c) (Baker's yeast) protein is Protein COS9 (COS9).